We begin with the raw amino-acid sequence, 245 residues long: Probable phosphatase YcdX (245 aa).

The Zn(2+) site is built by His7, His9, His15, His40, Glu73, His101, His131, Asp192, and His194.

The protein belongs to the PHP family. Homotrimer. The cofactor is Zn(2+).

In Salmonella arizonae (strain ATCC BAA-731 / CDC346-86 / RSK2980), this protein is Probable phosphatase YcdX.